The chain runs to 492 residues: Nuclear autoantigenic sperm protein homolog (492 aa).

Over residues 1 to 14 (MSAEAEAIVTTATA) the composition is skewed to low complexity. Disordered regions lie at residues 1-52 (MSAE…EQER) and 123-254 (DVPD…EEGV). A phosphothreonine mark is found at T32 and T33. Acidic residues predominate over residues 124-145 (VPDEAADDDDEDVDDDEEESAE). 2 stretches are compositionally biased toward basic and acidic residues: residues 147-159 (GAAK…DTKE) and 170-179 (KELDTIKEGS). Phosphoserine is present on residues S179 and S184. T185 carries the phosphothreonine modification. S193 bears the Phosphoserine mark. The span at 226-238 (STSNGEVTASCSN) shows a compositional bias: polar residues. Over residues 244-253 (VEEEPEEEEG) the composition is skewed to acidic residues. TPR repeat units lie at residues 284-317 (AEVQ…HGEL) and 326-359 (AELH…IEEE). The stretch at 377-400 (MLDLEETKQEILAKIQEIEEMQAQ) forms a coiled coil. The span at 418 to 459 (SGDAAAASSSSSSSANGAASSSSSSSKGAAAASSSTISSSSA) shows a compositional bias: low complexity. The segment at 418–492 (SGDAAAASSS…LCSPAKRAAV (75 aa)) is disordered. Residues S478 and S485 each carry the phosphoserine modification.

The protein belongs to the NASP family. As to quaternary structure, interacts with the histone H3-H4 heterodimer; the interaction with H4 is probably indirect and mediated by H3 (His3, His3.3A and His3.3B). Interacts with His2Av; this interaction directly or indirectly destabilizes His2Av.

It localises to the cytoplasm. The protein localises to the nucleus. The protein resides in the perinuclear region. In terms of biological role, component of the histone chaperone network. Binds and stabilizes histone H3-H4 not bound to chromatin to maintain a soluble reservoir and modulate degradation by chaperone-mediated autophagy. May also bind and stabilize monomeric H3. Maternal effect gene essential for early embryogenesis. The sequence is that of Nuclear autoantigenic sperm protein homolog from Drosophila melanogaster (Fruit fly).